Here is a 142-residue protein sequence, read N- to C-terminus: Taurine up-regulated 1 protein (142 aa).

Residues 1 to 40 form the signal peptide; it reads MARPPPLPGLVGRRSGRAVDRAIGWRLFLLLWHPALGAQA. The Extracellular segment spans residues 41-123; sequence RPPRRAPGGR…ARTQLEGQEG (83 aa). The helical transmembrane segment at 124-140 threads the bilayer; the sequence is AGGWLVVGFLLCLFLLM. The Cytoplasmic portion of the chain corresponds to 141 to 142; that stretch reads PP.

Widely expressed in the adult with highest levels in placenta and testis. Also expressed in a number of embryonic tissues at multiple embryonic stages.

The protein localises to the nucleus membrane. It is found in the mitochondrion membrane. It localises to the cytoplasm. This is Taurine up-regulated 1 protein from Mus musculus (Mouse).